The primary structure comprises 83 residues: Probable calcium-binding protein CML28 (83 aa).

2 EF-hand domains span residues 5 to 40 and 43 to 75; these read TEKA…LGSV and EDIK…NRGL. Residues Asp18, Asn20, Asp22, Lys24, Glu29, Asp53, Asp55, Asp57, Tyr59, and Glu64 each coordinate Ca(2+).

Functionally, potential calcium sensor. In Arabidopsis thaliana (Mouse-ear cress), this protein is Probable calcium-binding protein CML28 (CML28).